The following is a 34-amino-acid chain: Photosystem II reaction center protein M (34 aa).

A helical membrane pass occupies residues 5-25 (ILAFIATALFILIPTAFLLIL).

Belongs to the PsbM family. As to quaternary structure, PSII is composed of 1 copy each of membrane proteins PsbA, PsbB, PsbC, PsbD, PsbE, PsbF, PsbH, PsbI, PsbJ, PsbK, PsbL, PsbM, PsbT, PsbX, PsbY, PsbZ, Psb30/Ycf12, at least 3 peripheral proteins of the oxygen-evolving complex and a large number of cofactors. It forms dimeric complexes.

The protein localises to the plastid. The protein resides in the chloroplast thylakoid membrane. Its function is as follows. One of the components of the core complex of photosystem II (PSII). PSII is a light-driven water:plastoquinone oxidoreductase that uses light energy to abstract electrons from H(2)O, generating O(2) and a proton gradient subsequently used for ATP formation. It consists of a core antenna complex that captures photons, and an electron transfer chain that converts photonic excitation into a charge separation. This subunit is found at the monomer-monomer interface. In Anthoceros angustus (Hornwort), this protein is Photosystem II reaction center protein M.